We begin with the raw amino-acid sequence, 180 residues long: Transcription factor IBH1-like 1 (180 aa).

The 51-residue stretch at 110-160 (KSKSASEEAAAKAKRLVKRRTQGLRNVVPGGELMSNDVLLLQETLDYIVSL) folds into the bHLH domain.

The protein belongs to the bHLH protein family.

The protein resides in the nucleus. Its function is as follows. Functions redundandly with IBH1/BHLH158 in a regulation node known as the incoherent feed-forward loop (FFL). Acts as transcriptional repressor that negatively regulates cell and organ elongation in response to gibberellin (GA) and brassinosteroid (BR) signaling. This chain is Transcription factor IBH1-like 1, found in Arabidopsis thaliana (Mouse-ear cress).